The chain runs to 149 residues: Calmodulin (149 aa).

At Ala2 the chain carries N-acetylalanine. 4 consecutive EF-hand domains span residues 8–43 (EQIA…LGQN), 44–79 (PTEA…KMKD), 81–116 (DSEE…LGEK), and 117–149 (LTDE…MTAK). Ca(2+) contacts are provided by Asp21, Asp23, Asp25, Thr27, Glu32, Asp57, Asp59, Asn61, Thr63, Glu68, Asp94, Asp96, Asn98, Tyr100, and Glu105. Lys116 carries the N6,N6,N6-trimethyllysine modification. Ca(2+) contacts are provided by Asp130, Asp132, Asp134, Gln136, and Glu141.

This sequence belongs to the calmodulin family.

In terms of biological role, calmodulin acts as part of a calcium signal transduction pathway by mediating the control of a large number of enzymes, ion channels, aquaporins and other proteins through calcium-binding. Calcium-binding is required for the activation of calmodulin. Among the enzymes to be stimulated by the calmodulin-calcium complex are a number of protein kinases, such as myosin light-chain kinases and calmodulin-dependent protein kinase type II (CaMK2), and phosphatases. The polypeptide is Calmodulin (calm) (Epinephelus akaara (Hong Kong grouper)).